A 309-amino-acid polypeptide reads, in one-letter code: Pyrroline-5-carboxylate reductase 1, mitochondrial (309 aa).

S2 is subject to N-acetylserine. NADP(+) is bound by residues 6–11 (IGAGQL) and S34. Residues A8, Q10, L11, S34, D36, N56, V70, K71, and A97 each contribute to the NADPH site. NADP(+) contacts are provided by residues N56, 69–72 (AVKP), and 95–97 (CAA). An L-proline-binding site is contributed by E164. NADPH is bound at residue N230. The L-proline site is built by A237 and T238. Phosphoserine occurs at positions 278 and 301.

Belongs to the pyrroline-5-carboxylate reductase family. In terms of assembly, homodecamer; composed of 5 homodimers. Interacts with LTO1. In terms of tissue distribution, highly expressed in osteoblasts and skin.

The protein localises to the mitochondrion. It carries out the reaction L-proline + NADP(+) = (S)-1-pyrroline-5-carboxylate + NADPH + 2 H(+). It catalyses the reaction L-proline + NAD(+) = (S)-1-pyrroline-5-carboxylate + NADH + 2 H(+). The protein operates within amino-acid biosynthesis; L-proline biosynthesis; L-proline from L-glutamate 5-semialdehyde: step 1/1. Its function is as follows. Oxidoreductase that catalyzes the last step in proline biosynthesis, which corresponds to the reduction of pyrroline-5-carboxylate to L-proline using NAD(P)H. At physiologic concentrations, has higher specific activity in the presence of NADH. Involved in the cellular response to oxidative stress. In Mus musculus (Mouse), this protein is Pyrroline-5-carboxylate reductase 1, mitochondrial.